The following is a 159-amino-acid chain: Ribosomal RNA large subunit methyltransferase H (159 aa).

Residues leucine 76, glycine 108, and 127–132 (FSKMTF) each bind S-adenosyl-L-methionine.

This sequence belongs to the RNA methyltransferase RlmH family. In terms of assembly, homodimer.

Its subcellular location is the cytoplasm. It carries out the reaction pseudouridine(1915) in 23S rRNA + S-adenosyl-L-methionine = N(3)-methylpseudouridine(1915) in 23S rRNA + S-adenosyl-L-homocysteine + H(+). Specifically methylates the pseudouridine at position 1915 (m3Psi1915) in 23S rRNA. This Clostridium botulinum (strain Langeland / NCTC 10281 / Type F) protein is Ribosomal RNA large subunit methyltransferase H.